The chain runs to 383 residues: MDLYEHQGKELLGRFGLRTLPGVVATTPEEARRAAERLGGTVAVKAQVLTGGRGKAGGIKVAESPEEAEEAARRILGMDIRGHTVRRLLIESGADIERELYLSAMVDRESRRPLILFSTEGGVDIEEVAERSPGSIVRLHVDPLVGLLPYQVRELTFASGLSGETAKDFGRAVQNLYEAFRGIDASLVEINPLVVTGEGEVVALDAKVTVDNSSLYRHQEIAGWRDVEAADPQEHRAQEVGLQYVKLDGDVGILGNGAGLVMSTLDVVAQAGGRPANFCDVGGGADAEKIATALEIVASNENVRSVFFNIFGGITRGDEVARGLLAAIRKTGIDLPVVVRLDGTNAEEGLRLLAEGAPENVHTEETMLDAARRAVELARDGGH.

The 228-residue stretch at 9–236 (KELLGRFGLR…VEAADPQEHR (228 aa)) folds into the ATP-grasp domain. Residues lysine 45, 52 to 54 (GRG), glutamate 91, alanine 94, and glutamate 99 contribute to the ATP site. Positions 191 and 205 each coordinate Mg(2+). Residues asparagine 256 and 313–315 (GIT) contribute to the substrate site.

Belongs to the succinate/malate CoA ligase beta subunit family. Heterotetramer of two alpha and two beta subunits. It depends on Mg(2+) as a cofactor.

The enzyme catalyses succinate + ATP + CoA = succinyl-CoA + ADP + phosphate. It carries out the reaction GTP + succinate + CoA = succinyl-CoA + GDP + phosphate. It participates in carbohydrate metabolism; tricarboxylic acid cycle; succinate from succinyl-CoA (ligase route): step 1/1. Its function is as follows. Succinyl-CoA synthetase functions in the citric acid cycle (TCA), coupling the hydrolysis of succinyl-CoA to the synthesis of either ATP or GTP and thus represents the only step of substrate-level phosphorylation in the TCA. The beta subunit provides nucleotide specificity of the enzyme and binds the substrate succinate, while the binding sites for coenzyme A and phosphate are found in the alpha subunit. This chain is Succinate--CoA ligase [ADP-forming] subunit beta, found in Rubrobacter xylanophilus (strain DSM 9941 / JCM 11954 / NBRC 16129 / PRD-1).